Consider the following 372-residue polypeptide: 4-hydroxy-3-methylbut-2-en-1-yl diphosphate synthase (flavodoxin) (372 aa).

[4Fe-4S] cluster is bound by residues Cys-270, Cys-273, Cys-305, and Glu-312.

This sequence belongs to the IspG family. [4Fe-4S] cluster serves as cofactor.

The catalysed reaction is (2E)-4-hydroxy-3-methylbut-2-enyl diphosphate + oxidized [flavodoxin] + H2O + 2 H(+) = 2-C-methyl-D-erythritol 2,4-cyclic diphosphate + reduced [flavodoxin]. Its pathway is isoprenoid biosynthesis; isopentenyl diphosphate biosynthesis via DXP pathway; isopentenyl diphosphate from 1-deoxy-D-xylulose 5-phosphate: step 5/6. Its function is as follows. Converts 2C-methyl-D-erythritol 2,4-cyclodiphosphate (ME-2,4cPP) into 1-hydroxy-2-methyl-2-(E)-butenyl 4-diphosphate. The chain is 4-hydroxy-3-methylbut-2-en-1-yl diphosphate synthase (flavodoxin) from Shigella dysenteriae serotype 1 (strain Sd197).